The following is a 227-amino-acid chain: Ribonuclease 3 (227 aa).

An RNase III domain is found at 4–126; that stretch reads LDRLERKIGY…IIGAMSLDQG (123 aa). Glutamate 39 lines the Mg(2+) pocket. Aspartate 43 is an active-site residue. The Mg(2+) site is built by aspartate 112 and glutamate 115. The active site involves glutamate 115. Residues 153–226 enclose the DRBM domain; the sequence is DAKTRLQEYL…AEQILKELDI (74 aa).

Belongs to the ribonuclease III family. In terms of assembly, homodimer. It depends on Mg(2+) as a cofactor.

The protein localises to the cytoplasm. The enzyme catalyses Endonucleolytic cleavage to 5'-phosphomonoester.. Digests double-stranded RNA. Involved in the processing of primary rRNA transcript to yield the immediate precursors to the large and small rRNAs (23S and 16S). Processes some mRNAs, and tRNAs when they are encoded in the rRNA operon. Processes pre-crRNA and tracrRNA of type II CRISPR loci if present in the organism. This Haemophilus influenzae (strain ATCC 51907 / DSM 11121 / KW20 / Rd) protein is Ribonuclease 3.